Consider the following 330-residue polypeptide: Acrylyl-CoA reductase AcuI (330 aa).

Residues Y44, 159 to 162 (AGGV), 181 to 183 (TGR), R201, L247, and S272 contribute to the NADP(+) site.

It belongs to the zinc-containing alcohol dehydrogenase family. Acrylyl-CoA reductase subfamily. In terms of assembly, homodimer.

Its subcellular location is the cytoplasm. The catalysed reaction is propanoyl-CoA + NADP(+) = acryloyl-CoA + NADPH + H(+). Probably catalyzes the NADPH-dependent reduction of acrylyl-CoA to propanoyl-CoA. Restores acrylate resistance when expressed in an E.coli strain K12 acuI deletion. This is Acrylyl-CoA reductase AcuI (acuI) from Ruegeria pomeroyi (strain ATCC 700808 / DSM 15171 / DSS-3) (Silicibacter pomeroyi).